The following is a 352-amino-acid chain: Large ribosomal subunit protein uL5m (352 aa).

The segment at 28 to 109 (STQTGAGAAA…HPIQSPPSSD (82 aa)) is disordered. Residues 63–80 (EEDKKEFRPWKRAADRKA) show a composition bias toward basic and acidic residues.

This sequence belongs to the universal ribosomal protein uL5 family. In terms of assembly, component of the mitochondrial large ribosomal subunit (mt-LSU). Mature N.crassa 74S mitochondrial ribosomes consist of a small (37S) and a large (54S) subunit. The 37S small subunit contains a 16S ribosomal RNA (16S mt-rRNA) and 32 different proteins. The 54S large subunit contains a 23S rRNA (23S mt-rRNA) and 42 different proteins. Unlike bacterial L5, uL5m does not bind zinc.

The protein localises to the mitochondrion. Functionally, component of the mitochondrial ribosome (mitoribosome), a dedicated translation machinery responsible for the synthesis of mitochondrial genome-encoded proteins, including at least some of the essential transmembrane subunits of the mitochondrial respiratory chain. The mitoribosomes are attached to the mitochondrial inner membrane and translation products are cotranslationally integrated into the membrane. In Neurospora crassa (strain ATCC 24698 / 74-OR23-1A / CBS 708.71 / DSM 1257 / FGSC 987), this protein is Large ribosomal subunit protein uL5m (mrpl7).